We begin with the raw amino-acid sequence, 348 residues long: D-alanine--D-alanine ligase (348 aa).

The ATP-grasp domain maps to 132–334 (KRILEVAGVP…YSDLIKELVV (203 aa)). 162–217 (LEKLTFPVFVKPANMGSSVGISKAENESELRSAIDLALKYDSRILIEQGVVAREIE) is a binding site for ATP. Positions 288, 301, and 303 each coordinate Mg(2+).

The protein belongs to the D-alanine--D-alanine ligase family. It depends on Mg(2+) as a cofactor. Mn(2+) serves as cofactor.

The protein resides in the cytoplasm. The enzyme catalyses 2 D-alanine + ATP = D-alanyl-D-alanine + ADP + phosphate + H(+). The protein operates within cell wall biogenesis; peptidoglycan biosynthesis. In terms of biological role, cell wall formation. The protein is D-alanine--D-alanine ligase of Streptococcus thermophilus (strain ATCC BAA-250 / LMG 18311).